The primary structure comprises 354 residues: UDP-N-acetylglucosamine--N-acetylmuramyl-(pentapeptide) pyrophosphoryl-undecaprenol N-acetylglucosamine transferase (354 aa).

Residues 13–15 (SGG), Asn-125, Ser-189, Ile-242, 261–266 (ALTVSE), and Gln-286 contribute to the UDP-N-acetyl-alpha-D-glucosamine site.

Belongs to the glycosyltransferase 28 family. MurG subfamily.

The protein localises to the cell inner membrane. The enzyme catalyses di-trans,octa-cis-undecaprenyl diphospho-N-acetyl-alpha-D-muramoyl-L-alanyl-D-glutamyl-meso-2,6-diaminopimeloyl-D-alanyl-D-alanine + UDP-N-acetyl-alpha-D-glucosamine = di-trans,octa-cis-undecaprenyl diphospho-[N-acetyl-alpha-D-glucosaminyl-(1-&gt;4)]-N-acetyl-alpha-D-muramoyl-L-alanyl-D-glutamyl-meso-2,6-diaminopimeloyl-D-alanyl-D-alanine + UDP + H(+). It participates in cell wall biogenesis; peptidoglycan biosynthesis. Cell wall formation. Catalyzes the transfer of a GlcNAc subunit on undecaprenyl-pyrophosphoryl-MurNAc-pentapeptide (lipid intermediate I) to form undecaprenyl-pyrophosphoryl-MurNAc-(pentapeptide)GlcNAc (lipid intermediate II). In Buchnera aphidicola subsp. Acyrthosiphon pisum (strain APS) (Acyrthosiphon pisum symbiotic bacterium), this protein is UDP-N-acetylglucosamine--N-acetylmuramyl-(pentapeptide) pyrophosphoryl-undecaprenol N-acetylglucosamine transferase.